The sequence spans 105 residues: Thioredoxin (105 aa).

The Thioredoxin domain maps to V2–A105. Residue K3 is modified to N6-acetyllysine. N6-succinyllysine is present on K8. Residues C32 and C35 each act as nucleophile in the active site. A disulfide bond links C32 and C35. K39 carries the post-translational modification N6-acetyllysine. S-nitrosocysteine is present on residues C62 and C69. Residue C73 is modified to S-nitrosocysteine; alternate. K94 carries the N6-acetyllysine; alternate modification. K94 carries the N6-succinyllysine; alternate modification.

The protein belongs to the thioredoxin family. As to quaternary structure, homodimer; disulfide-linked. Interacts with TXNIP through the redox-active site. Interacts with MAP3K5 and CASP3. Interacts with APEX1; the interaction stimulates the FOS/JUN AP-1 DNA-binding activity in a redox-dependent manner. In the fully reduced protein, both Cys-69 and Cys-73 are nitrosylated in response to nitric oxide (NO). When two disulfide bonds are present in the protein, only Cys-73 is nitrosylated. Cys-73 can serve as donor for nitrosylation of target proteins.

It is found in the nucleus. The protein localises to the cytoplasm. The protein resides in the secreted. In terms of biological role, participates in various redox reactions through the reversible oxidation of its active center dithiol to a disulfide and catalyzes dithiol-disulfide exchange reactions. Plays a role in the reversible S-nitrosylation of cysteine residues in target proteins, and thereby contributes to the response to intracellular nitric oxide. Nitrosylates the active site Cys of CASP3 in response to nitric oxide (NO), and thereby inhibits caspase-3 activity. Induces the FOS/JUN AP-1 DNA binding activity in ionizing radiation (IR) cells through its oxidation/reduction status and stimulates AP-1 transcriptional activity. Its function is as follows. ADF augments the expression of the interleukin-2 receptor TAC (IL2R/P55). This Mus musculus (Mouse) protein is Thioredoxin (Txn).